The chain runs to 707 residues: Polyribonucleotide nucleotidyltransferase (707 aa).

Residues D487 and D493 each contribute to the Mg(2+) site. The 60-residue stretch at 554–613 folds into the KH domain; it reads PSMATIKIDPDKIRDVIGKGGATIRKICDDTGASIDLDDDGTVRIYAEDKTAAKAAIDTV. Residues 623–691 enclose the S1 motif domain; the sequence is GKLYRGTVAR…NRNRVKLSIK (69 aa).

The protein belongs to the polyribonucleotide nucleotidyltransferase family. Component of the RNA degradosome, which is a multiprotein complex involved in RNA processing and mRNA degradation. Requires Mg(2+) as cofactor.

Its subcellular location is the cytoplasm. It carries out the reaction RNA(n+1) + phosphate = RNA(n) + a ribonucleoside 5'-diphosphate. Its function is as follows. Involved in mRNA degradation. Catalyzes the phosphorolysis of single-stranded polyribonucleotides processively in the 3'- to 5'-direction. The sequence is that of Polyribonucleotide nucleotidyltransferase from Chromohalobacter salexigens (strain ATCC BAA-138 / DSM 3043 / CIP 106854 / NCIMB 13768 / 1H11).